The chain runs to 128 residues: uncharacterized protein (128 aa).

This is an uncharacterized protein from Bacillus subtilis (strain 168).